The primary structure comprises 179 residues: 5'-deoxynucleotidase VV1_0013 (179 aa).

H53 is a binding site for a divalent metal cation. Residues 62–65 and D122 contribute to the substrate site; that span reads DLPT. D122 is a binding site for a divalent metal cation.

It belongs to the 5DNU family. As to quaternary structure, homodimer. Requires a divalent metal cation as cofactor.

It is found in the cytoplasm. It carries out the reaction a 2'-deoxyribonucleoside 5'-phosphate + H2O = a 2'-deoxyribonucleoside + phosphate. In terms of biological role, catalyzes the strictly specific dephosphorylation of 2'-deoxyribonucleoside 5'-monophosphates. This chain is 5'-deoxynucleotidase VV1_0013, found in Vibrio vulnificus (strain CMCP6).